The following is a 298-amino-acid chain: Mitochondrial basic amino acids transporter (298 aa).

A run of 6 helical transmembrane segments spans residues 2-22 (ALDF…GHPF), 61-81 (GLGS…GVQG), 96-116 (FLAG…MELA), 153-172 (GMVS…FLTY), 187-207 (LLVP…WLST), and 255-275 (LLRA…VLSY). 3 Solcar repeats span residues 2–86 (ALDF…TLRA), 90–178 (DSPL…LTRA), and 185–275 (DRLL…VLSY).

The protein belongs to the mitochondrial carrier (TC 2.A.29) family.

It localises to the mitochondrion inner membrane. It carries out the reaction L-lysine(out) + L-arginine(in) = L-lysine(in) + L-arginine(out). It catalyses the reaction L-histidine(out) + L-arginine(in) = L-histidine(in) + L-arginine(out). The catalysed reaction is L-ornithine(in) + L-arginine(out) = L-ornithine(out) + L-arginine(in). The enzyme catalyses L-homoarginine(in) + L-arginine(out) = L-homoarginine(out) + L-arginine(in). It carries out the reaction N(omega)-methyl-L-arginine(in) + L-arginine(out) = N(omega)-methyl-L-arginine(out) + L-arginine(in). It catalyses the reaction L-arginine(in) = L-arginine(out). The catalysed reaction is L-lysine(in) = L-lysine(out). The enzyme catalyses L-ornithine(in) = L-ornithine(out). It carries out the reaction L-histidine(out) = L-histidine(in). Its function is as follows. Mitochondrial transporter of arginine, lysine, homoarginine, methylarginine and, to a much lesser extent, ornithine and histidine. Does not transport carnitine nor acylcarnitines. Functions by both counter-exchange and uniport mechanisms. Plays a physiological role in the import of basic amino acids into mitochondria for mitochondrial protein synthesis and amino acid degradation. The protein is Mitochondrial basic amino acids transporter (SLC25A29) of Bos taurus (Bovine).